Here is a 138-residue protein sequence, read N- to C-terminus: Large ribosomal subunit protein bL17 (138 aa).

It belongs to the bacterial ribosomal protein bL17 family. In terms of assembly, part of the 50S ribosomal subunit. Contacts protein L32.

This is Large ribosomal subunit protein bL17 from Bradyrhizobium diazoefficiens (strain JCM 10833 / BCRC 13528 / IAM 13628 / NBRC 14792 / USDA 110).